The chain runs to 189 residues: Isopentenyl-diphosphate Delta-isomerase (189 aa).

Residues His-27 and His-34 each coordinate Mn(2+). The Nudix hydrolase domain occupies 32–171 (PLHFAFSTYI…PFVFSPWMVD (140 aa)). Cys-69 is a catalytic residue. His-71 provides a ligand contact to Mn(2+). Glu-89 is a binding site for Mg(2+). Mn(2+) contacts are provided by Glu-119 and Glu-121. The active site involves Glu-121.

It belongs to the IPP isomerase type 1 family. Mg(2+) serves as cofactor. It depends on Mn(2+) as a cofactor.

The protein localises to the cytoplasm. It catalyses the reaction isopentenyl diphosphate = dimethylallyl diphosphate. Its pathway is isoprenoid biosynthesis; dimethylallyl diphosphate biosynthesis; dimethylallyl diphosphate from isopentenyl diphosphate: step 1/1. Functionally, catalyzes the 1,3-allylic rearrangement of the homoallylic substrate isopentenyl (IPP) to its highly electrophilic allylic isomer, dimethylallyl diphosphate (DMAPP). The sequence is that of Isopentenyl-diphosphate Delta-isomerase from Corynebacterium glutamicum (strain R).